Consider the following 580-residue polypeptide: Acyl-coenzyme A synthetase ACSM4, mitochondrial (580 aa).

The N-terminal 22 residues, 1-22, are a transit peptide targeting the mitochondrion; that stretch reads MKVLLRCQRLRFIWLAKPAGRH. Residues 229-237, 368-373, D455, R470, and K566 contribute to the ATP site; these read TSGTTGSPK and EGYGQT.

It belongs to the ATP-dependent AMP-binding enzyme family. The cofactor is Mg(2+). Mn(2+) is required as a cofactor. In terms of tissue distribution, detected in adult olfactory epithelium.

The protein localises to the mitochondrion. It catalyses the reaction a medium-chain fatty acid + ATP + CoA = a medium-chain fatty acyl-CoA + AMP + diphosphate. It carries out the reaction hexanoate + ATP + CoA = hexanoyl-CoA + AMP + diphosphate. The catalysed reaction is octanoate + ATP + CoA = octanoyl-CoA + AMP + diphosphate. The enzyme catalyses decanoate + ATP + CoA = decanoyl-CoA + AMP + diphosphate. It catalyses the reaction dodecanoate + ATP + CoA = dodecanoyl-CoA + AMP + diphosphate. Functionally, catalyzes the activation of fatty acids by CoA to produce an acyl-CoA, the first step in fatty acid metabolism. Capable of activating medium-chain fatty acids with a preference for C6-12 fatty acids. The polypeptide is Acyl-coenzyme A synthetase ACSM4, mitochondrial (Acsm4) (Rattus norvegicus (Rat)).